The primary structure comprises 278 residues: Elongation factor Ts (278 aa).

The interval 82–85 (TDFV) is involved in Mg(2+) ion dislocation from EF-Tu.

This sequence belongs to the EF-Ts family.

The protein resides in the cytoplasm. Its function is as follows. Associates with the EF-Tu.GDP complex and induces the exchange of GDP to GTP. It remains bound to the aminoacyl-tRNA.EF-Tu.GTP complex up to the GTP hydrolysis stage on the ribosome. The protein is Elongation factor Ts (tsf) of Streptomyces ramocissimus.